The sequence spans 396 residues: Mannonate dehydratase (396 aa).

It belongs to the mannonate dehydratase family. The cofactor is Fe(2+). Mn(2+) is required as a cofactor.

The enzyme catalyses D-mannonate = 2-dehydro-3-deoxy-D-gluconate + H2O. It functions in the pathway carbohydrate metabolism; pentose and glucuronate interconversion. In terms of biological role, catalyzes the dehydration of D-mannonate. This Yersinia enterocolitica serotype O:8 / biotype 1B (strain NCTC 13174 / 8081) protein is Mannonate dehydratase.